A 127-amino-acid polypeptide reads, in one-letter code: Small ribosomal subunit protein uS12 (127 aa).

Asp-89 is subject to 3-methylthioaspartic acid.

This sequence belongs to the universal ribosomal protein uS12 family. In terms of assembly, part of the 30S ribosomal subunit. Contacts proteins S8 and S17. May interact with IF1 in the 30S initiation complex.

In terms of biological role, with S4 and S5 plays an important role in translational accuracy. Interacts with and stabilizes bases of the 16S rRNA that are involved in tRNA selection in the A site and with the mRNA backbone. Located at the interface of the 30S and 50S subunits, it traverses the body of the 30S subunit contacting proteins on the other side and probably holding the rRNA structure together. The combined cluster of proteins S8, S12 and S17 appears to hold together the shoulder and platform of the 30S subunit. In Campylobacter fetus subsp. fetus (strain 82-40), this protein is Small ribosomal subunit protein uS12.